The primary structure comprises 358 residues: Alpha-2-HS-glycoprotein (358 aa).

The N-terminal stretch at 1 to 18 is a signal peptide; it reads MKFFVLFLCLVQLWGCHS. Positions 27 to 133 constitute a Cystatin fetuin-A-type 1 domain; it reads ERNPACDDPE…QFSVVFAKCE (107 aa). Disulfide bonds link Cys32–Cys349, Cys89–Cys100, Cys114–Cys132, Cys146–Cys149, Cys208–Cys218, and Cys229–Cys246. Asn99 is a glycosylation site (N-linked (GlcNAc...) asparagine). Position 134 is a phosphoserine (Ser134). The residue at position 135 (Thr135) is a Phosphothreonine. A Phosphoserine modification is found at Ser138. A Cystatin fetuin-A-type 2 domain is found at 144-254; that stretch reads KVCPQCPLLT…TCTVFPTQPV (111 aa). Asn156 and Asn176 each carry an N-linked (GlcNAc...) asparagine glycan. The disordered stretch occupies residues 257–288; sequence LPQPDAASSANPPPAADPAVSPPSSPSVPVDS. Positions 267–282 are enriched in pro residues; sequence NPPPAADPAVSPPSSP. Phosphoserine is present on residues Ser318 and Ser320. Residues 320–350 form a disordered region; sequence SGEAFGPRQKPKVTHPGVASGVGPVPPPPCP.

This sequence belongs to the fetuin family. Post-translationally, phosphorylated by FAM20C in the extracellular medium. In terms of tissue distribution, bone marrow.

It is found in the secreted. This chain is Alpha-2-HS-glycoprotein (AHSG), found in Cavia porcellus (Guinea pig).